Consider the following 398-residue polypeptide: Phosphoglycerate kinase (398 aa).

Substrate is bound by residues 24–26 (DFN), Arg40, 63–66 (HMGR), Arg122, and Arg155. ATP-binding positions include Lys206, Gly294, Glu325, and 354–357 (GGDS).

It belongs to the phosphoglycerate kinase family. Monomer.

It is found in the cytoplasm. The enzyme catalyses (2R)-3-phosphoglycerate + ATP = (2R)-3-phospho-glyceroyl phosphate + ADP. It participates in carbohydrate degradation; glycolysis; pyruvate from D-glyceraldehyde 3-phosphate: step 2/5. In Picosynechococcus sp. (strain ATCC 27264 / PCC 7002 / PR-6) (Agmenellum quadruplicatum), this protein is Phosphoglycerate kinase.